A 103-amino-acid polypeptide reads, in one-letter code: Potassium voltage-gated channel subfamily E member 3 (103 aa).

Residues N5, N22, and N41 are each glycosylated (N-linked (GlcNAc...) asparagine). The tract at residues 32–53 (RPGPGLGPDNQTEERRASLPGR) is disordered. Basic and acidic residues predominate over residues 43 to 53 (TEERRASLPGR). A helical transmembrane segment spans residues 57-77 (SYMYILFVMFLFAVTVGSLIL). The interaction with KCNQ1 stretch occupies residues 68–79 (FAVTVGSLILGY). Residues 78 to 103 (GYTRSRKVDKRSDPYHVYIKNRVSMI) are Cytoplasmic-facing.

Belongs to the potassium channel KCNE family. In terms of assembly, interacts with KCNB1. Interacts with KCNC2. Associates with KCNC4/Kv3.4. Interacts with KCNQ1; associates with a KCNQ1:KCNE3 stoichiometry of 4:4; produces a current with nearly instantaneous activation with a linear current-voltage relationship and alters membrane raft localization; affects KCNQ1 structure and gating properties. In terms of tissue distribution, expressed in hippocampal neurons (at protein level). Widely expressed with highest levels in kidney and moderate levels in small intestine.

It localises to the cell membrane. Its subcellular location is the cytoplasm. The protein localises to the perikaryon. It is found in the cell projection. The protein resides in the dendrite. It localises to the membrane raft. Ancillary protein that functions as a regulatory subunit of the voltage-gated potassium (Kv) channel complex composed of pore-forming and potassium-conducting alpha subunits and of regulatory beta subunits. KCNE3 beta subunit modulates the gating kinetics and enhances stability of the channel complex. Alters the gating of the delayed rectifier Kv channel containing KCNB1 alpha subunit. Associates with KCNC4/Kv3.4 alpha subunit to form the subthreshold Kv channel in skeletal muscle and to establish the resting membrane potential (RMP) in muscle cells. Association with KCNQ1/KCLQT1 alpha subunit may form the intestinal cAMP-stimulated potassium channel involved in chloride secretion that produces a current with nearly instantaneous activation with a linear current-voltage relationship. This Homo sapiens (Human) protein is Potassium voltage-gated channel subfamily E member 3.